A 251-amino-acid polypeptide reads, in one-letter code: uncharacterized protein (251 aa).

An RING-type zinc finger spans residues 192–238 (CMMCVQRGDERVAITTPYTTDCGHTYCYACIMSRLKLVNNVSCPICK).

It is found in the cytoplasm. This is an uncharacterized protein from Schizosaccharomyces pombe (strain 972 / ATCC 24843) (Fission yeast).